Here is a 368-residue protein sequence, read N- to C-terminus: UPF0284 protein PCC8801_3324 (368 aa).

The protein belongs to the UPF0284 family.

This chain is UPF0284 protein PCC8801_3324, found in Rippkaea orientalis (strain PCC 8801 / RF-1) (Cyanothece sp. (strain PCC 8801)).